A 259-amino-acid polypeptide reads, in one-letter code: GTP cyclohydrolase FolE2 (259 aa).

Belongs to the GTP cyclohydrolase IV family.

It catalyses the reaction GTP + H2O = 7,8-dihydroneopterin 3'-triphosphate + formate + H(+). Its pathway is cofactor biosynthesis; 7,8-dihydroneopterin triphosphate biosynthesis; 7,8-dihydroneopterin triphosphate from GTP: step 1/1. Its function is as follows. Converts GTP to 7,8-dihydroneopterin triphosphate. The polypeptide is GTP cyclohydrolase FolE2 (Thermotoga petrophila (strain ATCC BAA-488 / DSM 13995 / JCM 10881 / RKU-1)).